Consider the following 257-residue polypeptide: UPF0246 protein Sputcn32_1053 (257 aa).

Belongs to the UPF0246 family.

This Shewanella putrefaciens (strain CN-32 / ATCC BAA-453) protein is UPF0246 protein Sputcn32_1053.